The following is an 85-amino-acid chain: Large ribosomal subunit protein bL27 (85 aa).

This sequence belongs to the bacterial ribosomal protein bL27 family.

The sequence is that of Large ribosomal subunit protein bL27 from Solibacter usitatus (strain Ellin6076).